A 361-amino-acid polypeptide reads, in one-letter code: Ribosomal RNA large subunit methyltransferase M (361 aa).

Residues Ser187, 220–223 (CPGG), Asp239, Asp259, and Asp276 each bind S-adenosyl-L-methionine. The active-site Proton acceptor is Lys305.

The protein belongs to the class I-like SAM-binding methyltransferase superfamily. RNA methyltransferase RlmE family. RlmM subfamily. Monomer.

It localises to the cytoplasm. It catalyses the reaction cytidine(2498) in 23S rRNA + S-adenosyl-L-methionine = 2'-O-methylcytidine(2498) in 23S rRNA + S-adenosyl-L-homocysteine + H(+). In terms of biological role, catalyzes the 2'-O-methylation at nucleotide C2498 in 23S rRNA. This chain is Ribosomal RNA large subunit methyltransferase M, found in Shewanella sp. (strain MR-7).